A 113-amino-acid polypeptide reads, in one-letter code: MAGFGLPNFGQLTEAFRKAQQIQQDAQALQEELDGMEIEGKNSDGRASVWLSGNQQPLRVRLDPALVQDGAEACETATLEALQAAYEQSTATMKGRMEELTGGLNLNLPGMGG.

It belongs to the YbaB/EbfC family. Homodimer.

It localises to the cytoplasm. The protein resides in the nucleoid. Functionally, binds to DNA and alters its conformation. May be involved in regulation of gene expression, nucleoid organization and DNA protection. The chain is Nucleoid-associated protein Syncc9902_0023 from Synechococcus sp. (strain CC9902).